We begin with the raw amino-acid sequence, 465 residues long: Ribulose bisphosphate carboxylase large chain (465 aa).

Position 4 is an N6,N6,N6-trimethyllysine (Lys4). Substrate-binding residues include Asn113 and Thr163. Catalysis depends on Lys165, which acts as the Proton acceptor. A substrate-binding site is contributed by Lys167. Mg(2+) contacts are provided by Lys191, Asp193, and Glu194. Lys191 is subject to N6-carboxylysine. His284 functions as the Proton acceptor in the catalytic mechanism. Substrate contacts are provided by Arg285, His317, and Ser369.

The protein belongs to the RuBisCO large chain family. Type I subfamily. As to quaternary structure, heterohexadecamer of 8 large chains and 8 small chains; disulfide-linked. The disulfide link is formed within the large subunit homodimers. Mg(2+) is required as a cofactor. Post-translationally, the disulfide bond which can form in the large chain dimeric partners within the hexadecamer appears to be associated with oxidative stress and protein turnover.

Its subcellular location is the plastid. It localises to the chloroplast. The enzyme catalyses 2 (2R)-3-phosphoglycerate + 2 H(+) = D-ribulose 1,5-bisphosphate + CO2 + H2O. The catalysed reaction is D-ribulose 1,5-bisphosphate + O2 = 2-phosphoglycolate + (2R)-3-phosphoglycerate + 2 H(+). RuBisCO catalyzes two reactions: the carboxylation of D-ribulose 1,5-bisphosphate, the primary event in carbon dioxide fixation, as well as the oxidative fragmentation of the pentose substrate in the photorespiration process. Both reactions occur simultaneously and in competition at the same active site. This chain is Ribulose bisphosphate carboxylase large chain, found in Bauera rubioides (Dog rose).